The primary structure comprises 248 residues: MFQKVEGIVIRTTDYGETNKIVTIFSREFGKISVMARGAKKPKSRLASISQLMTHGHFLIQMGSGLGTLQQGEMISSMKEIREDIFLTAYASFIVELTDKATEDKKNNPYLFEMLYQTLHYMCDGVDPEVLSLIYQTKMLPVLGMHPYFDTCAICHQETDFVAFSVREGGFLCFRHAEQDPYRIPVGEAVHKLLRLFYHFDLGRLGNVSVKDETKRQIRTVLNTYYDEYCGIYLKSRRFLEQLDKFQI.

Belongs to the RecO family.

Involved in DNA repair and RecF pathway recombination. The polypeptide is DNA repair protein RecO (Bacillus cytotoxicus (strain DSM 22905 / CIP 110041 / 391-98 / NVH 391-98)).